A 272-amino-acid polypeptide reads, in one-letter code: Catechol O-methyltransferase (272 aa).

Residues 1–6 (MLEAPP) are Cytoplasmic-facing. The helical; Signal-anchor for type II membrane protein transmembrane segment at 7-27 (LLLVAGGVGLALLALRWLATT) threads the bilayer. At 28 to 272 (DLQFFGRAFI…YKGLSGPARP (245 aa)) the chain is on the extracellular side. Residues V93, E115, S123, E141, 168–171 (GASQ), S170, and D192 each bind S-adenosyl-L-methionine. D192 contributes to the Mg(2+) binding site. Position 195 (K195) interacts with substrate. Residues D220 and N221 each contribute to the Mg(2+) site. N221 and E250 together coordinate substrate. The residue at position 267 (S267) is a Phosphoserine.

This sequence belongs to the class I-like SAM-binding methyltransferase superfamily. Cation-dependent O-methyltransferase family. Mg(2+) serves as cofactor.

The protein localises to the cytoplasm. Its subcellular location is the cell membrane. The enzyme catalyses a catechol + S-adenosyl-L-methionine = a guaiacol + S-adenosyl-L-homocysteine + H(+). It carries out the reaction 2-hydroxyestrone + S-adenosyl-L-methionine = 2-hydroxy-3-methoxy-estrone + S-adenosyl-L-homocysteine + H(+). The catalysed reaction is 4-hydroxyestrone + S-adenosyl-L-methionine = 4-methoxyestrone + S-adenosyl-L-homocysteine + H(+). It catalyses the reaction 2-hydroxyestrone + S-adenosyl-L-methionine = 2-methoxyestrone + S-adenosyl-L-homocysteine + H(+). The enzyme catalyses 4-hydroxy-17beta-estradiol + S-adenosyl-L-methionine = 4-methoxy-17beta-estradiol + S-adenosyl-L-homocysteine + H(+). It carries out the reaction 2-hydroxy-17beta-estradiol + S-adenosyl-L-methionine = 2-hydroxy-3-methoxy-17beta-estradiol + S-adenosyl-L-homocysteine + H(+). The catalysed reaction is 2-hydroxy-17beta-estradiol + S-adenosyl-L-methionine = 2-methoxy-17beta-estradiol + S-adenosyl-L-homocysteine + H(+). In terms of biological role, catalyzes the O-methylation, and thereby the inactivation, of catecholamine neurotransmitters and catechol hormones. Also shortens the biological half-lives of certain neuroactive drugs, like L-DOPA, alpha-methyl DOPA and isoproterenol. The sequence is that of Catechol O-methyltransferase (COMT) from Bos taurus (Bovine).